A 151-amino-acid chain; its full sequence is UPF0178 protein CPS_3584 (151 aa).

Belongs to the UPF0178 family.

In Colwellia psychrerythraea (strain 34H / ATCC BAA-681) (Vibrio psychroerythus), this protein is UPF0178 protein CPS_3584.